The primary structure comprises 257 residues: Ribosomal RNA small subunit methyltransferase J (257 aa).

S-adenosyl-L-methionine-binding positions include 107–108, 123–124, and Asp177; these read RD and ER.

It belongs to the methyltransferase superfamily. RsmJ family.

It is found in the cytoplasm. The enzyme catalyses guanosine(1516) in 16S rRNA + S-adenosyl-L-methionine = N(2)-methylguanosine(1516) in 16S rRNA + S-adenosyl-L-homocysteine + H(+). In terms of biological role, specifically methylates the guanosine in position 1516 of 16S rRNA. The chain is Ribosomal RNA small subunit methyltransferase J from Haemophilus influenzae (strain PittGG).